The primary structure comprises 251 residues: E3 ubiquitin-protein ligase Os06g0535400 (251 aa).

A run of 3 helical transmembrane segments spans residues 28 to 48, 102 to 122, and 127 to 147; these read VVAATFTGSFSLQIFLFYCFA, LANRCFAVVFMVFVPLVIVVF, and ADVVAYALCLANILVMVVWLS. The RING-type; atypical zinc-finger motif lies at 185-227; the sequence is CCVCLAGMREAQALRDLPRCGHRFHAKCIGKWLTAHPTCPVCR.

The protein localises to the membrane. The enzyme catalyses S-ubiquitinyl-[E2 ubiquitin-conjugating enzyme]-L-cysteine + [acceptor protein]-L-lysine = [E2 ubiquitin-conjugating enzyme]-L-cysteine + N(6)-ubiquitinyl-[acceptor protein]-L-lysine.. It functions in the pathway protein modification; protein ubiquitination. Functionally, possesses E3 ubiquitin-protein ligase in vitro. This is E3 ubiquitin-protein ligase Os06g0535400 from Oryza sativa subsp. japonica (Rice).